We begin with the raw amino-acid sequence, 224 residues long: Ribulose-phosphate 3-epimerase (224 aa).

S8 is a binding site for substrate. Residues H31, D33, and H64 each coordinate a divalent metal cation. D33 (proton acceptor) is an active-site residue. Substrate-binding positions include H64, 140 to 143, 173 to 175, and 195 to 196; these read GFGG, DGG, and GS. D173 serves as a coordination point for a divalent metal cation. D173 (proton donor) is an active-site residue.

Belongs to the ribulose-phosphate 3-epimerase family. It depends on a divalent metal cation as a cofactor.

It catalyses the reaction D-ribulose 5-phosphate = D-xylulose 5-phosphate. Its pathway is carbohydrate degradation. Functionally, catalyzes the reversible epimerization of D-ribulose 5-phosphate to D-xylulose 5-phosphate. The polypeptide is Ribulose-phosphate 3-epimerase (Mycobacterium leprae (strain TN)).